The primary structure comprises 81 residues: Photosystem I iron-sulfur center (81 aa).

4Fe-4S ferredoxin-type domains follow at residues Ala-2–Trp-31 and Ile-39–Tyr-68. [4Fe-4S] cluster contacts are provided by Cys-11, Cys-14, Cys-17, Cys-21, Cys-48, Cys-51, Cys-54, and Cys-58.

As to quaternary structure, the eukaryotic PSI reaction center is composed of at least 11 subunits. [4Fe-4S] cluster serves as cofactor.

The protein resides in the plastid. It is found in the chloroplast thylakoid membrane. It catalyses the reaction reduced [plastocyanin] + hnu + oxidized [2Fe-2S]-[ferredoxin] = oxidized [plastocyanin] + reduced [2Fe-2S]-[ferredoxin]. Apoprotein for the two 4Fe-4S centers FA and FB of photosystem I (PSI); essential for photochemical activity. FB is the terminal electron acceptor of PSI, donating electrons to ferredoxin. The C-terminus interacts with PsaA/B/D and helps assemble the protein into the PSI complex. Required for binding of PsaD and PsaE to PSI. PSI is a plastocyanin-ferredoxin oxidoreductase, converting photonic excitation into a charge separation, which transfers an electron from the donor P700 chlorophyll pair to the spectroscopically characterized acceptors A0, A1, FX, FA and FB in turn. The protein is Photosystem I iron-sulfur center of Gnetum parvifolium (Small-leaved jointfir).